Reading from the N-terminus, the 717-residue chain is UvrABC system protein C (717 aa).

Residues 16 to 95 (DSPGVYKFRD…IKEFDPRFNV (80 aa)) form the GIY-YIG domain. The UVR domain maps to 208 to 243 (GTYIRRLEKDMMQAAEEMEYERAARLRDDAEALKRA). Residues 467-548 (ERTGEWEEAP…PREDDGRPKR (82 aa)) form a disordered region. Residues 477–522 (EAAPGSASVHASATGPAATGQATAGPAAMGQAAAGPVSTGPAATGP) are compositionally biased toward low complexity.

This sequence belongs to the UvrC family. In terms of assembly, interacts with UvrB in an incision complex.

It localises to the cytoplasm. Functionally, the UvrABC repair system catalyzes the recognition and processing of DNA lesions. UvrC both incises the 5' and 3' sides of the lesion. The N-terminal half is responsible for the 3' incision and the C-terminal half is responsible for the 5' incision. The chain is UvrABC system protein C from Streptomyces griseus subsp. griseus (strain JCM 4626 / CBS 651.72 / NBRC 13350 / KCC S-0626 / ISP 5235).